The primary structure comprises 160 residues: Pyruvoyl-dependent arginine decarboxylase (160 aa).

S39 is modified (pyruvic acid (Ser)).

This sequence belongs to the PdaD family. Requires pyruvate as cofactor.

It carries out the reaction L-arginine + H(+) = agmatine + CO2. The sequence is that of Pyruvoyl-dependent arginine decarboxylase (pdaD) from Halobacterium salinarum (strain ATCC 29341 / DSM 671 / R1).